We begin with the raw amino-acid sequence, 433 residues long: 3-phosphoshikimate 1-carboxyvinyltransferase (433 aa).

3-phosphoshikimate contacts are provided by Lys-22, Ser-23, and Arg-27. Lys-22 lines the phosphoenolpyruvate pocket. Residues Gly-96 and Arg-130 each coordinate phosphoenolpyruvate. Residues Ser-176, Ser-177, Gln-178, Ser-204, Asp-319, Asn-342, and Lys-346 each contribute to the 3-phosphoshikimate site. Gln-178 is a binding site for phosphoenolpyruvate. Residue Asp-319 is the Proton acceptor of the active site. Residues Arg-350, Arg-394, and Lys-419 each contribute to the phosphoenolpyruvate site.

It belongs to the EPSP synthase family. In terms of assembly, monomer.

It localises to the cytoplasm. It carries out the reaction 3-phosphoshikimate + phosphoenolpyruvate = 5-O-(1-carboxyvinyl)-3-phosphoshikimate + phosphate. The protein operates within metabolic intermediate biosynthesis; chorismate biosynthesis; chorismate from D-erythrose 4-phosphate and phosphoenolpyruvate: step 6/7. In terms of biological role, catalyzes the transfer of the enolpyruvyl moiety of phosphoenolpyruvate (PEP) to the 5-hydroxyl of shikimate-3-phosphate (S3P) to produce enolpyruvyl shikimate-3-phosphate and inorganic phosphate. In Actinobacillus succinogenes (strain ATCC 55618 / DSM 22257 / CCUG 43843 / 130Z), this protein is 3-phosphoshikimate 1-carboxyvinyltransferase.